We begin with the raw amino-acid sequence, 121 residues long: MARIAGVDIPNDKRVVVSLTYVYGIGLPTSKKILAAAGVSEDIRVKDLTIEQEDAIRREVDAIKVEGDLRREVNLNIKRLMEIGSYRGIRHRRGLPVRGQNTKNNARTRKGKAVAIAGKKK.

The segment at 94–121 is disordered; it reads GLPVRGQNTKNNARTRKGKAVAIAGKKK. Positions 106 to 121 are enriched in basic residues; sequence ARTRKGKAVAIAGKKK.

The protein belongs to the universal ribosomal protein uS13 family. As to quaternary structure, part of the 30S ribosomal subunit. Forms a loose heterodimer with protein S19. Forms two bridges to the 50S subunit in the 70S ribosome.

In terms of biological role, located at the top of the head of the 30S subunit, it contacts several helices of the 16S rRNA. In the 70S ribosome it contacts the 23S rRNA (bridge B1a) and protein L5 of the 50S subunit (bridge B1b), connecting the 2 subunits; these bridges are implicated in subunit movement. Contacts the tRNAs in the A and P-sites. The protein is Small ribosomal subunit protein uS13 of Streptococcus sanguinis (strain SK36).